A 257-amino-acid polypeptide reads, in one-letter code: MQKMTIKEAENVLKEIMNEEDDRFQLLMKDERKGVQKLVLKWYKQKELEQKEKENFFEMSKYENALREKGVTYIAGIDEVGRGPLAGPVVTAAVVLPEDFYIPGLNDSKKLSEAKRERFYDEIKVQAIAIGVGIVSPQVIDDINIYQATKQAMLDAVANLSCTPQHLLIDAMKLPTPIPQTSIIKGDAKSISISAASIIAKVTRDRMMKELGEKYPEYGFEQHMGYGTKQHLEAIEVHGVLDEHRKSFAPIKDMIQK.

The region spanning 72–257 is the RNase H type-2 domain; the sequence is TYIAGIDEVG…FAPIKDMIQK (186 aa). 3 residues coordinate a divalent metal cation: aspartate 78, glutamate 79, and aspartate 170.

It belongs to the RNase HII family. Mn(2+) serves as cofactor. The cofactor is Mg(2+).

It is found in the cytoplasm. It catalyses the reaction Endonucleolytic cleavage to 5'-phosphomonoester.. Functionally, endonuclease that specifically degrades the RNA of RNA-DNA hybrids. This Bacillus cereus (strain G9842) protein is Ribonuclease HII.